The primary structure comprises 633 residues: Extracellular metalloproteinase 3 (633 aa).

Positions 1-18 (MHGLLLAGLLALPMNVLA) are cleaved as a signal peptide. Positions 19–246 (HPAEQHASNV…VHNVVDYVAS (228 aa)) are excised as a propeptide. The N-linked (GlcNAc...) asparagine glycan is linked to asparagine 410. Histidine 429 serves as a coordination point for Zn(2+). The active site involves glutamate 430. Histidine 433 contributes to the Zn(2+) binding site. Residues asparagine 480 and asparagine 622 are each glycosylated (N-linked (GlcNAc...) asparagine).

Belongs to the peptidase M36 family. Requires Zn(2+) as cofactor.

Its subcellular location is the secreted. Functionally, secreted metalloproteinase probably acting as a virulence factor. In Trichophyton tonsurans (Scalp ringworm fungus), this protein is Extracellular metalloproteinase 3 (MEP3).